A 128-amino-acid polypeptide reads, in one-letter code: Probable 4-amino-4-deoxy-L-arabinose-phosphoundecaprenol flippase subunit ArnF (128 aa).

Residues 1 to 2 lie on the Cytoplasmic side of the membrane; it reads MG. Residues 3 to 23 form a helical membrane-spanning segment; that stretch reads LMWGLFSVIIASAAQLSMGFA. Topologically, residues 24-35 are periplasmic; that stretch reads ASHLPPMTHLWD. A helical transmembrane segment spans residues 36 to 56; that stretch reads FIAALLAFGLDARILLLGLLG. At 57–76 the chain is on the cytoplasmic side; the sequence is YLLSVFCWYKTLHKLALSKA. A helical membrane pass occupies residues 77–97; it reads YALLSMSYVLVWIASMVLPGW. The Periplasmic portion of the chain corresponds to 98-100; the sequence is EGT. Residues 101-121 traverse the membrane as a helical segment; sequence FSLKALLGVACIMSGLMLIFL. Topologically, residues 122-128 are cytoplasmic; sequence PTTKQRY.

The protein belongs to the ArnF family. In terms of assembly, heterodimer of ArnE and ArnF.

The protein resides in the cell inner membrane. It functions in the pathway bacterial outer membrane biogenesis; lipopolysaccharide biosynthesis. Functionally, translocates 4-amino-4-deoxy-L-arabinose-phosphoundecaprenol (alpha-L-Ara4N-phosphoundecaprenol) from the cytoplasmic to the periplasmic side of the inner membrane. The protein is Probable 4-amino-4-deoxy-L-arabinose-phosphoundecaprenol flippase subunit ArnF of Escherichia coli O45:K1 (strain S88 / ExPEC).